The sequence spans 148 residues: Protein GLUTAMINE DUMPER 3 (148 aa).

A disordered region spans residues 1–24; it reads MEGRQYYPPRENVEGNRTTMGGGP. At 1-34 the chain is on the extracellular side; sequence MEGRQYYPPRENVEGNRTTMGGGPHSPWHSPVPY. A helical transmembrane segment spans residues 35 to 55; that stretch reads LFGGLAAMLGLIAFALLILAC. At 56-148 the chain is on the cytoplasmic side; it reads SYWRLSGYLD…RSSESNGETH (93 aa). The VIMAG motif lies at 99–103; sequence VIMAG. Acidic residues predominate over residues 120–132; that stretch reads CDDDDDEDDDVEG. The segment at 120 to 148 is disordered; sequence CDDDDDEDDDVEGSDQVVPRSSESNGETH. The span at 138 to 148 shows a compositional bias: polar residues; it reads PRSSESNGETH.

This sequence belongs to the GLUTAMINE DUMPER 1 (TC 9.B.60) family. As to expression, expressed in the vascular tissues. Also detected in anthers.

The protein localises to the membrane. Probable subunit of an amino acid transporter involved in the regulation of the amino acid metabolism. Stimulates amino acid export by activating nonselective amino acid facilitators. Acts upstream genes involved in the salicylic acid (SA) pathway and in the geminivirus-host interaction. This is Protein GLUTAMINE DUMPER 3 (GDU3) from Arabidopsis thaliana (Mouse-ear cress).